The chain runs to 508 residues: ATP synthase subunit alpha, chloroplastic (508 aa).

Residue 172–179 (GDRQTGKT) participates in ATP binding.

Belongs to the ATPase alpha/beta chains family. As to quaternary structure, F-type ATPases have 2 components, CF(1) - the catalytic core - and CF(0) - the membrane proton channel. CF(1) has five subunits: alpha(3), beta(3), gamma(1), delta(1), epsilon(1). CF(0) has four main subunits: a, b, b' and c.

The protein localises to the plastid. It is found in the chloroplast thylakoid membrane. The enzyme catalyses ATP + H2O + 4 H(+)(in) = ADP + phosphate + 5 H(+)(out). Functionally, produces ATP from ADP in the presence of a proton gradient across the membrane. The alpha chain is a regulatory subunit. This Angiopteris evecta (Mule's foot fern) protein is ATP synthase subunit alpha, chloroplastic.